The chain runs to 233 residues: Octanoyltransferase (233 aa).

The BPL/LPL catalytic domain maps to 38–218 (AGGPDTLLLL…LVCDALDGVL (181 aa)). The segment covering 57–66 (RRTEPHERPL) has biased composition (basic and acidic residues). A disordered region spans residues 57 to 77 (RRTEPHERPLDGTPVVDTDRG). Residues 76-83 (RGGKITWH), 148-150 (AIG), and 161-163 (GFA) each bind substrate. The Acyl-thioester intermediate role is filled by Cys179.

It belongs to the LipB family.

It localises to the cytoplasm. It carries out the reaction octanoyl-[ACP] + L-lysyl-[protein] = N(6)-octanoyl-L-lysyl-[protein] + holo-[ACP] + H(+). It participates in protein modification; protein lipoylation via endogenous pathway; protein N(6)-(lipoyl)lysine from octanoyl-[acyl-carrier-protein]: step 1/2. Functionally, catalyzes the transfer of endogenously produced octanoic acid from octanoyl-acyl-carrier-protein onto the lipoyl domains of lipoate-dependent enzymes. Lipoyl-ACP can also act as a substrate although octanoyl-ACP is likely to be the physiological substrate. In Mycobacterium avium (strain 104), this protein is Octanoyltransferase.